The chain runs to 673 residues: Capsid protein (673 aa).

Residues 575–595 (NLPTDSSLESDSDSEPAPKKK) are disordered.

This sequence belongs to the anelloviridae capsid protein family.

It localises to the virion. Its function is as follows. Self-assembles to form an icosahedral capsid with a T=1 symmetry, about 30 nm in diameter, and consisting of 60 capsid proteins. The capsid encapsulates the genomic DNA. Capsid protein is involved in attachment and entry into the host cell. The chain is Capsid protein from Homo sapiens (Human).